The chain runs to 61 residues: uncharacterized protein (61 aa).

Residues 23–61 (VPTKWQDYKKPGPNQKYTSDGKKRRRIRRSQKSILGVRS) are disordered. Positions 44–53 (KKRRRIRRSQ) are enriched in basic residues.

This is an uncharacterized protein from Archaeoglobus fulgidus (strain ATCC 49558 / DSM 4304 / JCM 9628 / NBRC 100126 / VC-16).